Here is a 29-residue protein sequence, read N- to C-terminus: Dermaseptin-J6 (29 aa).

Valine amide is present on Val29.

Expressed by the skin glands.

The protein localises to the secreted. In terms of biological role, has antimicrobial activity. This Phasmahyla jandaia (Jandaia leaf frog) protein is Dermaseptin-J6.